Consider the following 505-residue polypeptide: Zinc finger protein 649 (505 aa).

The 72-residue stretch at 8–79 folds into the KRAB domain; sequence LTLEDVAVDF…EDEIHSPAHP (72 aa). A Glycyl lysine isopeptide (Lys-Gly) (interchain with G-Cter in SUMO2) cross-link involves residue Lys112. 10 consecutive C2H2-type zinc fingers follow at residues 178–200, 206–228, 234–256, 262–284, 290–312, 318–340, 346–368, 374–396, 402–424, and 430–452; these read HECTDCGKAFLKKSQLTEHKRIH, HVCSLCGKAFYKKYRLTEHERAH, HGCSLCGKAFYKRYRLTEHERAH, YGCSECGKAFPRKSELTEHQRIH, HQCSECGRAFSRKSLLVVHQRTH, HTCSECGKGFIQKGNLNIHQRTH, YGCIDCGKAFSQKSCLVAHQRYH, FVCPECGQPCSQKSGLIRHQKIH, YKCSDCGKAFLTKTMLIVHHRTH, and YGCDECEKAYFYMSCLVKHKRIH. Residues 455 to 481 are disordered; sequence EKRGDSVKVENPSTASHSLSPSEHVQG. The span at 465–477 shows a compositional bias: polar residues; sequence NPSTASHSLSPSE.

Belongs to the krueppel C2H2-type zinc-finger protein family. In terms of tissue distribution, highly expressed in heart, skeletal muscle, and brain. Lower expression in liver, lung, kidney, pancreas and placenta.

It is found in the nucleus. Its function is as follows. Transcriptional repressor. Regulator of transcriptional factor complexes and may suppress SRE and AP-1 transcription activities mediated by growth factor signaling pathways. The polypeptide is Zinc finger protein 649 (ZNF649) (Homo sapiens (Human)).